The sequence spans 481 residues: Phospho-2-dehydro-3-deoxyheptonate aldolase (481 aa).

Residues 1 to 22 form a disordered region; the sequence is MSQQTTPNAPGWAPDSWRSKPI.

It belongs to the class-II DAHP synthase family. Homodimer. The N-terminus is blocked.

It catalyses the reaction D-erythrose 4-phosphate + phosphoenolpyruvate + H2O = 7-phospho-2-dehydro-3-deoxy-D-arabino-heptonate + phosphate. It participates in metabolic intermediate biosynthesis; chorismate biosynthesis; chorismate from D-erythrose 4-phosphate and phosphoenolpyruvate: step 1/7. The protein is Phospho-2-dehydro-3-deoxyheptonate aldolase (aro-8) of Neurospora crassa (strain ATCC 24698 / 74-OR23-1A / CBS 708.71 / DSM 1257 / FGSC 987).